The sequence spans 120 residues: NAD(P)H-quinone oxidoreductase subunit 3, chloroplastic (120 aa).

A run of 3 helical transmembrane segments spans residues 9 to 29, 64 to 84, and 88 to 108; these read IFWA…LISG, MFAL…PWAM, and VLGV…ILGL.

Belongs to the complex I subunit 3 family. NDH is composed of at least 16 different subunits, 5 of which are encoded in the nucleus.

The protein localises to the plastid. It is found in the chloroplast thylakoid membrane. It catalyses the reaction a plastoquinone + NADH + (n+1) H(+)(in) = a plastoquinol + NAD(+) + n H(+)(out). The catalysed reaction is a plastoquinone + NADPH + (n+1) H(+)(in) = a plastoquinol + NADP(+) + n H(+)(out). NDH shuttles electrons from NAD(P)H:plastoquinone, via FMN and iron-sulfur (Fe-S) centers, to quinones in the photosynthetic chain and possibly in a chloroplast respiratory chain. The immediate electron acceptor for the enzyme in this species is believed to be plastoquinone. Couples the redox reaction to proton translocation, and thus conserves the redox energy in a proton gradient. The sequence is that of NAD(P)H-quinone oxidoreductase subunit 3, chloroplastic from Draba nemorosa (Woodland whitlowgrass).